Reading from the N-terminus, the 1350-residue chain is Protein transport protein SEC16A homolog (1350 aa).

Disordered stretches follow at residues 26–45 (YTPTASSSAKELKFDDGSDS), 73–97 (LGNDVANEGTSGSVGKEEPSSSIAP), 964–1063 (MPPP…TRKV), 1118–1216 (AEEA…KPPI), and 1235–1350 (QVME…EVEL). Positions 35-45 (KELKFDDGSDS) are enriched in basic and acidic residues. A Phosphoserine modification is found at S43. The span at 970 to 1002 (HSTTGNPQVNEYQHQQQEAAKLSYSQSANTMSS) shows a compositional bias: polar residues. The segment covering 1150-1168 (SPSSGSWSSGSPTPSENSP) has biased composition (low complexity). Polar residues-rich tracts occupy residues 1195–1210 (TYNQGSSSMYQSPPVQ) and 1289–1316 (RSGSGTSLNGDLPQSVSRRTASWSGSVN). Residues 1317-1343 (SSSFMSPTSASTFRPSPLNSSSSSLGE) show a composition bias toward low complexity.

It belongs to the SEC16 family. In terms of assembly, interacts with SEC13A, SEC13B and SEC31A.

Its subcellular location is the golgi apparatus. The protein resides in the golgi stack. The protein localises to the endoplasmic reticulum. Its function is as follows. Required for efficient protein export from the endoplasmic reticulum (ER) to the Golgi by regulating COPII coat dynamics at the ER. Functions as a scaffold and regulator of COPII coat assembly at ER exit sites. The protein is Protein transport protein SEC16A homolog of Arabidopsis thaliana (Mouse-ear cress).